Reading from the N-terminus, the 247-residue chain is Adenosine 5'-phosphosulfate reductase (247 aa).

Residues C133, C134, C216, and C219 each contribute to the [4Fe-4S] cluster site. The segment at 222–247 (KPAPGSDPRSGRWAGQAKTECGLHAS) is disordered. C242 (nucleophile; cysteine thiosulfonate intermediate) is an active-site residue.

This sequence belongs to the PAPS reductase family. CysH subfamily. Requires [4Fe-4S] cluster as cofactor.

It localises to the cytoplasm. It catalyses the reaction [thioredoxin]-disulfide + sulfite + AMP + 2 H(+) = adenosine 5'-phosphosulfate + [thioredoxin]-dithiol. It participates in sulfur metabolism; hydrogen sulfide biosynthesis; sulfite from sulfate. In terms of biological role, catalyzes the formation of sulfite from adenosine 5'-phosphosulfate (APS) using thioredoxin as an electron donor. This chain is Adenosine 5'-phosphosulfate reductase, found in Rhodococcus opacus (strain B4).